Reading from the N-terminus, the 116-residue chain is Large ribosomal subunit protein bL19 (116 aa).

It belongs to the bacterial ribosomal protein bL19 family.

Functionally, this protein is located at the 30S-50S ribosomal subunit interface and may play a role in the structure and function of the aminoacyl-tRNA binding site. This chain is Large ribosomal subunit protein bL19, found in Haemophilus influenzae (strain 86-028NP).